The chain runs to 146 residues: Peptidyl-lysine N-acetyltransferase YiaC (146 aa).

Positions 1–143 constitute an N-acetyltransferase domain; the sequence is MIREAQRSEL…PTWIMSWPVV (143 aa).

The protein belongs to the acetyltransferase family.

The enzyme catalyses L-lysyl-[protein] + acetyl-CoA = N(6)-acetyl-L-lysyl-[protein] + CoA + H(+). In terms of biological role, N-epsilon-lysine acetyltransferase that catalyzes acetylation of a large number of proteins. Overexpression inhibits motility. The polypeptide is Peptidyl-lysine N-acetyltransferase YiaC (yiaC) (Escherichia coli (strain K12)).